We begin with the raw amino-acid sequence, 174 residues long: Repair DNA polymerase X (174 aa).

Positions 42 to 51 are involved in ssDNA binding; sequence REEKMLNDVD. Positions 49 and 51 each coordinate Mg(2+). A disulfide bridge links C81 with C86. D100 provides a ligand contact to Mg(2+).

Belongs to the DNA polymerase type-X family. It depends on Mg(2+) as a cofactor.

It is found in the virion. It catalyses the reaction DNA(n) + a 2'-deoxyribonucleoside 5'-triphosphate = DNA(n+1) + diphosphate. Functionally, error-prone polymerase lacking a proofreading 3'-5' exonuclease which catalyzes the gap-filling reaction during the DNA repair process. Specifically binds intermediates in the single-nucleotide base-excision repair process. Also catalyzes DNA polymerization with low nucleotide-insertion fidelity. Probably acts as a strategic DNA mutase, which gives rise to a rapid emergence of variants. Generates mismatched G-G pairs, in that case, the polymerase first binds the deoxynucleotide followed by mismatch formation. Together with the viral DNA ligase, fills the single nucleotide gaps generated by the AP endonuclease. Binds DNA with high affinity via the helix alphaE. The sequence is that of Repair DNA polymerase X from Ornithodoros (relapsing fever ticks).